The following is a 49-amino-acid chain: Large ribosomal subunit protein bL33 (49 aa).

Belongs to the bacterial ribosomal protein bL33 family.

This Leuconostoc citreum (strain KM20) protein is Large ribosomal subunit protein bL33.